The primary structure comprises 342 residues: Methylthioribose-1-phosphate isomerase (342 aa).

Substrate-binding positions include 49-51 (RGA), Arg-86, and Gln-187. The Proton donor role is filled by Asp-228. 238 to 239 (NK) contributes to the substrate binding site.

Belongs to the eIF-2B alpha/beta/delta subunits family. MtnA subfamily.

It carries out the reaction 5-(methylsulfanyl)-alpha-D-ribose 1-phosphate = 5-(methylsulfanyl)-D-ribulose 1-phosphate. Its pathway is amino-acid biosynthesis; L-methionine biosynthesis via salvage pathway; L-methionine from S-methyl-5-thio-alpha-D-ribose 1-phosphate: step 1/6. In terms of biological role, catalyzes the interconversion of methylthioribose-1-phosphate (MTR-1-P) into methylthioribulose-1-phosphate (MTRu-1-P). The protein is Methylthioribose-1-phosphate isomerase of Serratia proteamaculans (strain 568).